We begin with the raw amino-acid sequence, 130 residues long: uncharacterized protein (130 aa).

Residues 15-31 (LYLCPAIIRLSSVCTLA) traverse the membrane as a helical segment.

It is found in the membrane. This is an uncharacterized protein from Saccharomyces cerevisiae (strain ATCC 204508 / S288c) (Baker's yeast).